The chain runs to 665 residues: tRNA 5-methylaminomethyl-2-thiouridine biosynthesis bifunctional protein MnmC (665 aa).

The tRNA (mnm(5)s(2)U34)-methyltransferase stretch occupies residues 1-243; sequence MSQTSLHHAR…KWAMLAGERV (243 aa). An FAD-dependent cmnm(5)s(2)U34 oxidoreductase region spans residues 268–665; sequence IGGGIASAMT…RKLLKGKPLN (398 aa).

It in the N-terminal section; belongs to the methyltransferase superfamily. tRNA (mnm(5)s(2)U34)-methyltransferase family. In the C-terminal section; belongs to the DAO family. Requires FAD as cofactor.

The protein resides in the cytoplasm. It catalyses the reaction 5-aminomethyl-2-thiouridine(34) in tRNA + S-adenosyl-L-methionine = 5-methylaminomethyl-2-thiouridine(34) in tRNA + S-adenosyl-L-homocysteine + H(+). Its function is as follows. Catalyzes the last two steps in the biosynthesis of 5-methylaminomethyl-2-thiouridine (mnm(5)s(2)U) at the wobble position (U34) in tRNA. Catalyzes the FAD-dependent demodification of cmnm(5)s(2)U34 to nm(5)s(2)U34, followed by the transfer of a methyl group from S-adenosyl-L-methionine to nm(5)s(2)U34, to form mnm(5)s(2)U34. The chain is tRNA 5-methylaminomethyl-2-thiouridine biosynthesis bifunctional protein MnmC from Aeromonas salmonicida (strain A449).